The chain runs to 251 residues: Coproheme decarboxylase (251 aa).

Residues Arg-133, 147-151, His-174, Gln-187, and Ser-225 each bind Fe-coproporphyrin III; that span reads YPMSK. Tyr-147 is an active-site residue.

The protein belongs to the ChdC family. Type 1 subfamily. Fe-coproporphyrin III serves as cofactor.

The catalysed reaction is Fe-coproporphyrin III + 2 H2O2 + 2 H(+) = heme b + 2 CO2 + 4 H2O. It catalyses the reaction Fe-coproporphyrin III + H2O2 + H(+) = harderoheme III + CO2 + 2 H2O. It carries out the reaction harderoheme III + H2O2 + H(+) = heme b + CO2 + 2 H2O. It functions in the pathway porphyrin-containing compound metabolism; protoheme biosynthesis. Functionally, involved in coproporphyrin-dependent heme b biosynthesis. Catalyzes the decarboxylation of Fe-coproporphyrin III (coproheme) to heme b (protoheme IX), the last step of the pathway. The reaction occurs in a stepwise manner with a three-propionate intermediate. This chain is Coproheme decarboxylase, found in Listeria welshimeri serovar 6b (strain ATCC 35897 / DSM 20650 / CCUG 15529 / CIP 8149 / NCTC 11857 / SLCC 5334 / V8).